The following is a 280-amino-acid chain: Ribosomal RNA small subunit methyltransferase A (280 aa).

Residues H13, L15, G40, E61, D85, and N105 each contribute to the S-adenosyl-L-methionine site.

Belongs to the class I-like SAM-binding methyltransferase superfamily. rRNA adenine N(6)-methyltransferase family. RsmA subfamily.

Its subcellular location is the cytoplasm. It catalyses the reaction adenosine(1518)/adenosine(1519) in 16S rRNA + 4 S-adenosyl-L-methionine = N(6)-dimethyladenosine(1518)/N(6)-dimethyladenosine(1519) in 16S rRNA + 4 S-adenosyl-L-homocysteine + 4 H(+). Specifically dimethylates two adjacent adenosines (A1518 and A1519) in the loop of a conserved hairpin near the 3'-end of 16S rRNA in the 30S particle. May play a critical role in biogenesis of 30S subunits. In Phocaeicola vulgatus (strain ATCC 8482 / DSM 1447 / JCM 5826 / CCUG 4940 / NBRC 14291 / NCTC 11154) (Bacteroides vulgatus), this protein is Ribosomal RNA small subunit methyltransferase A.